The chain runs to 758 residues: GPI ethanolamine phosphate transferase 2 (758 aa).

N-linked (GlcNAc...) asparagine glycans are attached at residues asparagine 28, asparagine 77, and asparagine 178. 3 helical membrane passes run 405 to 425 (LVAI…FRNL), 431 to 451 (LLAF…SSFI), and 455 to 472 (HVIW…QLLN). Asparagine 493 is a glycosylation site (N-linked (GlcNAc...) asparagine). The next 6 helical transmembrane spans lie at 533-553 (PSPI…MPII), 561-581 (PIIA…LLLI), 598-618 (LFIL…YDIW), 667-687 (IFAV…WWCL), 698-718 (VKTF…SCFI), and 733-753 (LLYN…ISTI).

It belongs to the PIGG/PIGN/PIGO family. PIGG subfamily.

It is found in the endoplasmic reticulum membrane. It participates in glycolipid biosynthesis; glycosylphosphatidylinositol-anchor biosynthesis. Its function is as follows. Ethanolamine phosphate transferase involved in glycosylphosphatidylinositol-anchor biosynthesis. Transfers ethanolamine phosphate to the GPI second mannose. In Schizosaccharomyces pombe (strain 972 / ATCC 24843) (Fission yeast), this protein is GPI ethanolamine phosphate transferase 2 (las21).